The following is a 327-amino-acid chain: Ribonucleoside-diphosphate reductase small chain (327 aa).

Positions 70, 101, and 104 each coordinate Fe cation. Y108 is a catalytic residue. Fe cation-binding residues include E164, E198, and H201.

It belongs to the ribonucleoside diphosphate reductase small chain family. Heterotetramer composed of a homodimer of the large subunit (R1) and a homodimer of the small subunit (R2). Larger multisubunit protein complex are also active, composed of (R1)n(R2)n. Fe cation serves as cofactor.

The catalysed reaction is a 2'-deoxyribonucleoside 5'-diphosphate + [thioredoxin]-disulfide + H2O = a ribonucleoside 5'-diphosphate + [thioredoxin]-dithiol. Its function is as follows. Ribonucleoside-diphosphate reductase holoenzyme provides the precursors necessary for viral DNA synthesis. Allows virus growth in non-dividing cells. Catalyzes the biosynthesis of deoxyribonucleotides from the corresponding ribonucleotides. This African swine fever virus (isolate Tick/South Africa/Pretoriuskop Pr4/1996) (ASFV) protein is Ribonucleoside-diphosphate reductase small chain.